A 367-amino-acid chain; its full sequence is Germination protease (367 aa).

Positions 1-15 (MKEPLDLSKYAVRTD) are excised as a propeptide.

This sequence belongs to the peptidase A25 family. As to quaternary structure, homotetramer. Post-translationally, autoproteolytically processed. The inactive tetrameric zymogen termed p46 autoprocesses to a smaller form termed p41, which is active only during spore germination.

It catalyses the reaction Endopeptidase action with P4 Glu or Asp, P1 preferably Glu &gt; Asp, P1' hydrophobic and P2' Ala.. Functionally, initiates the rapid degradation of small, acid-soluble proteins during spore germination. This is Germination protease from Bacillus cytotoxicus (strain DSM 22905 / CIP 110041 / 391-98 / NVH 391-98).